Consider the following 286-residue polypeptide: NAD kinase (286 aa).

D67 functions as the Proton acceptor in the catalytic mechanism. Residues 67 to 68 (DG), R72, 141 to 142 (ND), R152, D171, 182 to 187 (TAYSLS), and Q242 contribute to the NAD(+) site.

Belongs to the NAD kinase family. A divalent metal cation is required as a cofactor.

The protein localises to the cytoplasm. It catalyses the reaction NAD(+) + ATP = ADP + NADP(+) + H(+). Functionally, involved in the regulation of the intracellular balance of NAD and NADP, and is a key enzyme in the biosynthesis of NADP. Catalyzes specifically the phosphorylation on 2'-hydroxyl of the adenosine moiety of NAD to yield NADP. The chain is NAD kinase from Ruminiclostridium cellulolyticum (strain ATCC 35319 / DSM 5812 / JCM 6584 / H10) (Clostridium cellulolyticum).